The sequence spans 2050 residues: Unconventional myosin-XVIIIa (2050 aa).

Basic and acidic residues-rich tracts occupy residues methionine 1 to glutamate 17 and glutamate 23 to arginine 34. The tract at residues methionine 1–arginine 34 is disordered. The segment at methionine 1–lysine 398 is mediates nucleotide-independent binding to F-actin and interaction with GOLPH3. 4 positions are modified to phosphoserine: serine 35, serine 52, serine 72, and serine 74. Threonine 79 is modified (phosphothreonine). 2 positions are modified to phosphoserine: serine 83 and serine 98. At threonine 99 the chain carries Phosphothreonine. Residues serine 102 and serine 103 each carry the phosphoserine modification. The Interaction with actin motif lies at arginine 114–leucine 118. Phosphoserine is present on residues serine 140, serine 145, serine 157, serine 160, serine 164, serine 234, and isoleucine 340. The segment at serine 140–valine 167 is disordered. Positions glutamate 220 to proline 311 constitute a PDZ domain. A Myosin N-terminal SH3-like domain is found at threonine 349–alanine 401. Residues aspartate 405–aspartate 1181 form the Myosin motor domain. Glycine 498–threonine 505 is an ATP binding site. 4 positions are modified to phosphoserine: serine 983, serine 1063, serine 1064, and serine 1066. The segment at proline 1051 to proline 1071 is disordered. Residues arginine 1055 to serine 1066 show a composition bias toward low complexity. An IQ domain is found at threonine 1184–alanine 1213. Residues leucine 1242 to aspartate 1967 adopt a coiled-coil conformation. Positions arginine 1448–arginine 1477 are disordered. Serine 1636 carries the phosphoserine modification. The segment at methionine 1848–lysine 1897 is disordered. Serine 1938, serine 1966, serine 1970, serine 1994, serine 1998, serine 2002, serine 2003, serine 2016, serine 2032, serine 2037, and serine 2039 each carry phosphoserine. The segment at tyrosine 1955–alanine 2050 is disordered. Phosphothreonine is present on threonine 2041. Positions threonine 2041 to alanine 2050 are enriched in basic and acidic residues.

This sequence belongs to the TRAFAC class myosin-kinesin ATPase superfamily. Myosin family. As to quaternary structure, homodimer. Forms a tripartite complex with CDC42BPA/CDC42BPB and LURAP1 with the latter acting as an adapter connecting CDC42BPA/CDC42BPB and MYO18A. Binds F-actin; regulated by ADP and GOLPH3. Interacts with GOLPH3; the interaction is direct and may link Golgi membranes to the actin cytoskeleton. Interacts with JAK3. Interacts with MSR1 and CD14. Post-translationally, phosphorylated on tyrosine upon CSF1R activation. Isoform 6 is phosphorylated on Ser-340. In terms of tissue distribution, isoform 1; Expressed ubiquitously. Isoform 2: Specifically expressed in most hematopoietic cells. Isoform 3: Predominantly expressed in alveolar macrophages.

Its subcellular location is the golgi apparatus. It is found in the trans-Golgi network. It localises to the golgi outpost. The protein resides in the cytoplasm. The protein localises to the cytoskeleton. Its subcellular location is the microtubule organizing center. It is found in the endoplasmic reticulum-Golgi intermediate compartment. In terms of biological role, may link Golgi membranes to the cytoskeleton and participate in the tensile force required for vesicle budding from the Golgi. Thereby, may play a role in Golgi membrane trafficking and could indirectly give its flattened shape to the Golgi apparatus. Alternatively, in concert with LURAP1 and CDC42BPA/CDC42BPB, has been involved in modulating lamellar actomyosin retrograde flow that is crucial to cell protrusion and migration. May be involved in the maintenance of the stromal cell architectures required for cell to cell contact. Regulates trafficking, expression, and activation of innate immune receptors on macrophages. Plays a role to suppress inflammatory responsiveness of macrophages via a mechanism that modulates CD14 trafficking. Acts as a receptor of surfactant-associated protein A (SFTPA1/SP-A) and plays an important role in internalization and clearance of SFTPA1-opsonized S.aureus by alveolar macrophages. Strongly enhances natural killer cell cytotoxicity. This chain is Unconventional myosin-XVIIIa (Myo18a), found in Mus musculus (Mouse).